The sequence spans 454 residues: Ornithine aminotransferase (454 aa).

Position 280 is an N6-(pyridoxal phosphate)lysine (Lys-280).

The protein belongs to the class-III pyridoxal-phosphate-dependent aminotransferase family. The cofactor is pyridoxal 5'-phosphate.

Its subcellular location is the cytoplasm. The catalysed reaction is a 2-oxocarboxylate + L-ornithine = L-glutamate 5-semialdehyde + an L-alpha-amino acid. The protein operates within amino-acid biosynthesis; L-proline biosynthesis; L-glutamate 5-semialdehyde from L-ornithine: step 1/1. The polypeptide is Ornithine aminotransferase (otaA) (Emericella nidulans (strain FGSC A4 / ATCC 38163 / CBS 112.46 / NRRL 194 / M139) (Aspergillus nidulans)).